Here is a 429-residue protein sequence, read N- to C-terminus: MLVVKKTPKIKGILSAPPSKSYTHRAVICASLANGVSNLKNPLNGADCLSSAHACEMFGAEIDLNDEKWVVRGSEFKTPDNIVDIGNSGTTLRILTGISSQISDGYTVLTGDDSIRKRPMQPLLDALKQLGLNCFSTKNNGTAPIVVKSGKISNNVVEIRGDMSSQFITSLMMTLPFSENDSEIILTTPIKSEPYLNITIDVLDKFGVKIDKIEEKNKVGYKIKGNQKYLPCDYTIEGDYSSASYLVAAGVLLNSDIVIKNVFKDSKQGDREIIEIVKKMGANVEINEDNVQIMGPYKLKGIEIDVTDIPDLVPTIAVLGCFAEGKTVVYNGEHVRLKECDRLAACTTELSKMGAEIEEKKDGLIITGVHKLNGAKLKTYHDHRLVMAFTIAGMMADGETVIEGEDSVKISFPDFVDKMKSIGSNIEVI.

Residues K20, S21, and R25 each contribute to the 3-phosphoshikimate site. K20 lines the phosphoenolpyruvate pocket. Phosphoenolpyruvate is bound by residues G89 and R118. Residues S164, S165, Q166, S192, D311, and K338 each contribute to the 3-phosphoshikimate site. A phosphoenolpyruvate-binding site is contributed by Q166. The Proton acceptor role is filled by D311. Phosphoenolpyruvate-binding residues include R342 and R384.

It belongs to the EPSP synthase family. Monomer.

It is found in the cytoplasm. It carries out the reaction 3-phosphoshikimate + phosphoenolpyruvate = 5-O-(1-carboxyvinyl)-3-phosphoshikimate + phosphate. It functions in the pathway metabolic intermediate biosynthesis; chorismate biosynthesis. Catalyzes the transfer of the enolpyruvyl moiety of phosphoenolpyruvate (PEP) to the 5-hydroxyl of shikimate-3-phosphate (S3P) to produce enolpyruvyl shikimate-3-phosphate and inorganic phosphate. The chain is 3-phosphoshikimate 1-carboxyvinyltransferase from Methanococcus maripaludis (strain C7 / ATCC BAA-1331).